Reading from the N-terminus, the 304-residue chain is Calmodulin-lysine N-methyltransferase (304 aa).

This sequence belongs to the class I-like SAM-binding methyltransferase superfamily. CLNMT methyltransferase family. As to quaternary structure, monomer. Expressed in discreet spatial and tissue-specific patterns including root tips, leaves-tips, floral buds, stamens, hydathodes, stigma, anther, siliques, apical meristems and germinating seeds. Also observed at high levels in the root stele region.

It localises to the cytoplasm. The protein resides in the nucleus. The catalysed reaction is [calmodulin]-L-lysine + S-adenosyl-L-methionine = [calmodulin]-N(6)-methyl-L-lysine + S-adenosyl-L-homocysteine + H(+). Its function is as follows. Catalyzes the trimethylation of calmodulin. Regulates roots development probably by modulating auxin signaling responses. May be involved in gravitropism. Involved in abscisic acid (ABA)-mediated and abiotic stress responses, including salt (NaCl), cold, drought and heat stresses. The protein is Calmodulin-lysine N-methyltransferase of Arabidopsis thaliana (Mouse-ear cress).